We begin with the raw amino-acid sequence, 363 residues long: Ribosomal RNA small subunit methyltransferase H (363 aa).

S-adenosyl-L-methionine-binding positions include 55 to 57 (GGH), Asp75, Asp122, and Gln129.

The protein belongs to the methyltransferase superfamily. RsmH family.

The protein localises to the cytoplasm. The catalysed reaction is cytidine(1402) in 16S rRNA + S-adenosyl-L-methionine = N(4)-methylcytidine(1402) in 16S rRNA + S-adenosyl-L-homocysteine + H(+). Functionally, specifically methylates the N4 position of cytidine in position 1402 (C1402) of 16S rRNA. This Bordetella petrii (strain ATCC BAA-461 / DSM 12804 / CCUG 43448) protein is Ribosomal RNA small subunit methyltransferase H.